A 178-amino-acid polypeptide reads, in one-letter code: Caveolin-1 (178 aa).

At S2 the chain carries N-acetylserine. S2 carries the post-translational modification Phosphoserine. Residues S2–V94 are required for homooligomerization. The Cytoplasmic segment spans residues S2–S104. K5 is modified (N6-acetyllysine; alternate). A Glycyl lysine isopeptide (Lys-Gly) (interchain with G-Cter in ubiquitin); alternate cross-link involves residue K5. Y6 is modified (phosphotyrosine). S9 bears the Phosphoserine mark. At Y14 the chain carries Phosphotyrosine; by ABL1. Y25 is subject to Phosphotyrosine. Glycyl lysine isopeptide (Lys-Gly) (interchain with G-Cter in ubiquitin) cross-links involve residues K26, K30, K39, K47, and K57. An interaction with CAVIN3 region spans residues D82 to V94. The helical intramembrane region spans S105–L125. Topologically, residues Y126–I178 are cytoplasmic. The segment at V131–Q142 is interacts with SPRY1, SPRY2, SPRY3 and SPRY4. Residues C133, C143, and C156 are each lipidated (S-palmitoyl cysteine). The tract at residues S149–Y160 is interacts with SPRY1, SPRY2, and SPRY4. The interval F167–I178 is interacts with SPRY1, SPRY2, SPRY3 and SPRY4.

It belongs to the caveolin family. As to quaternary structure, homooligomer. Interacts with GLIPR2. Interacts with NOSTRIN. Interacts with SNAP25 and STX1A. Interacts (via the N-terminus) with DPP4; the interaction is direct. Interacts with CTNNB1, CDH1 and JUP. Interacts with PACSIN2; this interaction induces membrane tubulation. Interacts with SLC7A9. Interacts with BMX and BTK. Interacts with TGFBR1. Interacts with CAVIN3 (via leucine-zipper domain) in a cholesterol-sensitive manner. Interacts with CAVIN1. Interacts with EHD2 in a cholesterol-dependent manner. Forms a ternary complex with UBXN6 and VCP; mediates CAV1 targeting to lysosomes for degradation. Interacts with ABCG1; this interaction regulates ABCG1-mediated cholesterol efflux. Interacts with NEU3; this interaction enhances NEU3 sialidase activity within caveola. Interacts (via C-terminus) with SPRY1, SPRY2 (via C-terminus), SPRY3, and SPRY4. Interacts with IGFBP5; this interaction allows trafficking of IGFBP5 from the plasma membrane to the nucleus. Post-translationally, phosphorylated at Tyr-14 by ABL1 in response to oxidative stress. In terms of processing, ubiquitinated. Undergo monoubiquitination and multi- and/or polyubiquitination. Monoubiquitination of N-terminal lysines promotes integration in a ternary complex with UBXN6 and VCP which promotes oligomeric CAV1 targeting to lysosomes for degradation. Ubiquitinated by ZNRF1; leading to degradation and modulation of the TLR4-mediated immune response.

The protein resides in the golgi apparatus membrane. It localises to the cell membrane. It is found in the membrane. The protein localises to the caveola. Its subcellular location is the membrane raft. Its function is as follows. May act as a scaffolding protein within caveolar membranes. Forms a stable heterooligomeric complex with CAV2 that targets to lipid rafts and drives caveolae formation. Mediates the recruitment of CAVIN proteins (CAVIN1/2/3/4) to the caveolae. Interacts directly with G-protein alpha subunits and can functionally regulate their activity. Involved in the costimulatory signal essential for T-cell receptor (TCR)-mediated T-cell activation. Its binding to DPP4 induces T-cell proliferation and NF-kappa-B activation in a T-cell receptor/CD3-dependent manner. Recruits CTNNB1 to caveolar membranes and may regulate CTNNB1-mediated signaling through the Wnt pathway. Negatively regulates TGFB1-mediated activation of SMAD2/3 by mediating the internalization of TGFBR1 from membrane rafts leading to its subsequent degradation. Binds 20(S)-hydroxycholesterol (20(S)-OHC). The protein is Caveolin-1 (CAV1) of Atelerix albiventris (Middle-African hedgehog).